The chain runs to 266 residues: Non-structural maintenance of chromosomes element 1 homolog (266 aa).

An interaction with NSMCE3 region spans residues Met1–Ala102. Residues Cys191 to Asn232 form an RING-type; atypical zinc finger. The tract at residues Glu246–His266 is disordered. The segment covering Ser256–His266 has biased composition (basic residues).

Belongs to the NSE1 family. As to quaternary structure, component of the SMC5-SMC6 complex which consists at least of SMC5, SMC6, NSMCE2, NSMCE1, NSMCE4A or EID3 and NSMCE3. NSMCE1, NSMCE4A or EID3 and NSMCE3 probably form a subcomplex that bridges the head domains of the SMC5-SMC6 heterodimer. Interacts with NSMCE3. Ubiquitinated.

It localises to the nucleus. The protein resides in the chromosome. The protein localises to the telomere. The catalysed reaction is S-ubiquitinyl-[E2 ubiquitin-conjugating enzyme]-L-cysteine + [acceptor protein]-L-lysine = [E2 ubiquitin-conjugating enzyme]-L-cysteine + N(6)-ubiquitinyl-[acceptor protein]-L-lysine.. Its function is as follows. RING-type zinc finger-containing E3 ubiquitin ligase that assembles with melanoma antigen protein (MAGE) to catalyze the direct transfer of ubiquitin from E2 ubiquitin-conjugating enzyme to a specific substrate. Within MAGE-RING ubiquitin ligase complex, MAGE stimulates and specifies ubiquitin ligase activity likely through recruitment and/or stabilization of the E2 ubiquitin-conjugating enzyme at the E3:substrate complex. Involved in maintenance of genome integrity, DNA damage response and DNA repair. NSMCE3/MAGEG1 and NSMCE1 ubiquitin ligase are components of SMC5-SMC6 complex and may positively regulate homologous recombination-mediated DNA repair. This chain is Non-structural maintenance of chromosomes element 1 homolog (Nsmce1), found in Rattus norvegicus (Rat).